Reading from the N-terminus, the 129-residue chain is Small ribosomal subunit protein uS11 (129 aa).

This sequence belongs to the universal ribosomal protein uS11 family. Part of the 30S ribosomal subunit. Interacts with proteins S7 and S18. Binds to IF-3.

Located on the platform of the 30S subunit, it bridges several disparate RNA helices of the 16S rRNA. Forms part of the Shine-Dalgarno cleft in the 70S ribosome. This Pectobacterium atrosepticum (strain SCRI 1043 / ATCC BAA-672) (Erwinia carotovora subsp. atroseptica) protein is Small ribosomal subunit protein uS11.